We begin with the raw amino-acid sequence, 346 residues long: Quinolinate synthase (346 aa).

Iminosuccinate is bound by residues His-47 and Ser-68. [4Fe-4S] cluster is bound at residue Cys-113. Residues 139-141 (YAN) and Ser-156 each bind iminosuccinate. Residue Cys-200 participates in [4Fe-4S] cluster binding. Residues 226-228 (HPE) and Thr-243 contribute to the iminosuccinate site. Cys-297 contributes to the [4Fe-4S] cluster binding site.

This sequence belongs to the quinolinate synthase family. Type 1 subfamily. [4Fe-4S] cluster serves as cofactor.

It localises to the cytoplasm. The catalysed reaction is iminosuccinate + dihydroxyacetone phosphate = quinolinate + phosphate + 2 H2O + H(+). The protein operates within cofactor biosynthesis; NAD(+) biosynthesis; quinolinate from iminoaspartate: step 1/1. Catalyzes the condensation of iminoaspartate with dihydroxyacetone phosphate to form quinolinate. The protein is Quinolinate synthase of Photorhabdus laumondii subsp. laumondii (strain DSM 15139 / CIP 105565 / TT01) (Photorhabdus luminescens subsp. laumondii).